Reading from the N-terminus, the 107-residue chain is Nucleoid-associated protein Mmar10_0436 (107 aa).

The protein belongs to the YbaB/EbfC family. As to quaternary structure, homodimer.

It is found in the cytoplasm. The protein resides in the nucleoid. In terms of biological role, binds to DNA and alters its conformation. May be involved in regulation of gene expression, nucleoid organization and DNA protection. This is Nucleoid-associated protein Mmar10_0436 from Maricaulis maris (strain MCS10) (Caulobacter maris).